The following is a 610-amino-acid chain: Protein arginine N-methyltransferase 5 (610 aa).

In terms of domain architecture, SAM-dependent MTase PRMT-type spans 284-587; that stretch reads LEIPLQPLCD…VDATKVWYEW (304 aa). Tyrosine 300 lines the S-adenosyl-L-methionine pocket. Residue phenylalanine 303 coordinates a protein. Residues 309–310, glutamate 368, and 396–397 each bind S-adenosyl-L-methionine; these read KY and DM. A protein-binding residues include glutamate 412 and glutamate 421. Residues glutamate 412 and glutamate 421 each act as proton donor/acceptor in the active site. Residues 470-610 are interaction with vls; that stretch reads AFDYGYVSLL…TRGTGYNMRL (141 aa).

Belongs to the class I-like SAM-binding methyltransferase superfamily. Protein arginine N-methyltransferase family. As to quaternary structure, interacts with vls. Expressed only in ovaries.

The protein resides in the cytoplasm. Functionally, arginine methyltransferase that can both catalyze the formation of omega-N monomethylarginine (MMA) and symmetrical dimethylarginine (sDMA). Specifically mediates the symmetrical dimethylation of arginine residues in the small nuclear ribonucleoproteins SmD1 and SmD3. Required for arginine symmetrical dimethylation of piwi family proteins, piwi, aub and AGO3, during germline development. Required during oogenesis for pole cell formation in the pathway controlled by oskar (osk) and for abdominal segments during early embryogenesis. Involved in nanos (nos) and germ cell mRNAs localization. The polypeptide is Protein arginine N-methyltransferase 5 (Drosophila melanogaster (Fruit fly)).